A 92-amino-acid polypeptide reads, in one-letter code: PqqA binding protein (92 aa).

The protein belongs to the PqqD family. Monomer. Interacts with PqqE.

It participates in cofactor biosynthesis; pyrroloquinoline quinone biosynthesis. Functions as a PqqA binding protein and presents PqqA to PqqE, in the pyrroloquinoline quinone (PQQ) biosynthetic pathway. The polypeptide is PqqA binding protein (Xanthomonas oryzae pv. oryzae (strain MAFF 311018)).